A 331-amino-acid polypeptide reads, in one-letter code: UPF0194 membrane protein YbhG (331 aa).

An N-terminal signal peptide occupies residues 1–19 (MKKPVVIGLAIAAIVTVIA). A coiled-coil region spans residues 107 to 208 (EEIAQAAAAV…LDLQDTTLIA (102 aa)).

Belongs to the UPF0194 family.

Its subcellular location is the periplasm. The chain is UPF0194 membrane protein YbhG from Salmonella arizonae (strain ATCC BAA-731 / CDC346-86 / RSK2980).